Here is a 293-residue protein sequence, read N- to C-terminus: ATP synthase subunit a (293 aa).

A run of 6 helical transmembrane segments spans residues 40–60 (DSLF…WLAA), 98–118 (FVAP…ALDL), 151–171 (DLNV…YYGI), 188–208 (FHAH…LNLI), 225–245 (MFAG…WTGF), and 264–284 (AIFH…LTLV).

Belongs to the ATPase A chain family. As to quaternary structure, F-type ATPases have 2 components, CF(1) - the catalytic core - and CF(0) - the membrane proton channel. CF(1) has five subunits: alpha(3), beta(3), gamma(1), delta(1), epsilon(1). CF(0) has three main subunits: a(1), b(2) and c(9-12). The alpha and beta chains form an alternating ring which encloses part of the gamma chain. CF(1) is attached to CF(0) by a central stalk formed by the gamma and epsilon chains, while a peripheral stalk is formed by the delta and b chains.

The protein resides in the cell inner membrane. Functionally, key component of the proton channel; it plays a direct role in the translocation of protons across the membrane. This chain is ATP synthase subunit a, found in Bordetella avium (strain 197N).